The sequence spans 355 residues: Phosphate acyltransferase (355 aa).

The protein belongs to the PlsX family. Homodimer. Probably interacts with PlsY.

The protein resides in the cytoplasm. The catalysed reaction is a fatty acyl-[ACP] + phosphate = an acyl phosphate + holo-[ACP]. The protein operates within lipid metabolism; phospholipid metabolism. In terms of biological role, catalyzes the reversible formation of acyl-phosphate (acyl-PO(4)) from acyl-[acyl-carrier-protein] (acyl-ACP). This enzyme utilizes acyl-ACP as fatty acyl donor, but not acyl-CoA. This chain is Phosphate acyltransferase, found in Azorhizobium caulinodans (strain ATCC 43989 / DSM 5975 / JCM 20966 / LMG 6465 / NBRC 14845 / NCIMB 13405 / ORS 571).